The chain runs to 298 residues: UDP-3-O-acyl-N-acetylglucosamine deacetylase (298 aa).

Zn(2+)-binding residues include histidine 75, histidine 232, and aspartate 236. The active-site Proton donor is the histidine 259.

It belongs to the LpxC family. It depends on Zn(2+) as a cofactor.

The catalysed reaction is a UDP-3-O-[(3R)-3-hydroxyacyl]-N-acetyl-alpha-D-glucosamine + H2O = a UDP-3-O-[(3R)-3-hydroxyacyl]-alpha-D-glucosamine + acetate. The protein operates within glycolipid biosynthesis; lipid IV(A) biosynthesis; lipid IV(A) from (3R)-3-hydroxytetradecanoyl-[acyl-carrier-protein] and UDP-N-acetyl-alpha-D-glucosamine: step 2/6. Catalyzes the hydrolysis of UDP-3-O-myristoyl-N-acetylglucosamine to form UDP-3-O-myristoylglucosamine and acetate, the committed step in lipid A biosynthesis. The sequence is that of UDP-3-O-acyl-N-acetylglucosamine deacetylase from Wolinella succinogenes (strain ATCC 29543 / DSM 1740 / CCUG 13145 / JCM 31913 / LMG 7466 / NCTC 11488 / FDC 602W) (Vibrio succinogenes).